Reading from the N-terminus, the 77-residue chain is Conotoxin Bt6.6 (77 aa).

The first 19 residues, 1 to 19 (MEKLTILLLVAAVLMSTQA), serve as a signal peptide directing secretion. Residues 20–38 (LIQSDGEKRQQAKINFLSX) constitute a propeptide that is removed on maturation. Cystine bridges form between Cys51–Cys65, Cys58–Cys69, and Cys64–Cys74.

The protein belongs to the conotoxin O2 superfamily. As to expression, expressed by the venom duct.

Its subcellular location is the secreted. The sequence is that of Conotoxin Bt6.6 from Conus betulinus (Beech cone).